A 156-amino-acid chain; its full sequence is Gene 55 protein (156 aa).

A disordered region spans residues 132 to 156 (KRRWSGGNASSHEERMRGPFTEVAE).

This is Gene 55 protein (55) from Mycobacterium phage L5 (Mycobacteriophage L5).